Here is a 256-residue protein sequence, read N- to C-terminus: Triosephosphate isomerase (256 aa).

Asn10–Lys12 lines the substrate pocket. The active-site Electrophile is the His99. The active-site Proton acceptor is Glu171. Substrate contacts are provided by residues Gly177, Ser216, and Gly237–Gly238.

It belongs to the triosephosphate isomerase family. In terms of assembly, homodimer.

It is found in the cytoplasm. The enzyme catalyses D-glyceraldehyde 3-phosphate = dihydroxyacetone phosphate. It functions in the pathway carbohydrate biosynthesis; gluconeogenesis. The protein operates within carbohydrate degradation; glycolysis; D-glyceraldehyde 3-phosphate from glycerone phosphate: step 1/1. In terms of biological role, involved in the gluconeogenesis. Catalyzes stereospecifically the conversion of dihydroxyacetone phosphate (DHAP) to D-glyceraldehyde-3-phosphate (G3P). This is Triosephosphate isomerase from Colwellia psychrerythraea (strain 34H / ATCC BAA-681) (Vibrio psychroerythus).